Reading from the N-terminus, the 212-residue chain is Small ribosomal subunit protein eS1 (212 aa).

This sequence belongs to the eukaryotic ribosomal protein eS1 family.

This is Small ribosomal subunit protein eS1 from Ignicoccus hospitalis (strain KIN4/I / DSM 18386 / JCM 14125).